The chain runs to 595 residues: Aspartate--tRNA ligase (595 aa).

Glu-173 contacts L-aspartate. Positions 197 to 200 (QLFK) are aspartate. L-aspartate is bound at residue Arg-219. ATP contacts are provided by residues 219-221 (RDE) and Gln-228. His-449 provides a ligand contact to L-aspartate. Residue Glu-483 participates in ATP binding. Arg-490 is a binding site for L-aspartate. ATP is bound at residue 535-538 (GLDR).

Belongs to the class-II aminoacyl-tRNA synthetase family. Type 1 subfamily. As to quaternary structure, homodimer.

The protein localises to the cytoplasm. It carries out the reaction tRNA(Asp) + L-aspartate + ATP = L-aspartyl-tRNA(Asp) + AMP + diphosphate. Its function is as follows. Catalyzes the attachment of L-aspartate to tRNA(Asp) in a two-step reaction: L-aspartate is first activated by ATP to form Asp-AMP and then transferred to the acceptor end of tRNA(Asp). This Shewanella sediminis (strain HAW-EB3) protein is Aspartate--tRNA ligase.